Consider the following 267-residue polypeptide: Indole-3-glycerol phosphate synthase (267 aa).

The protein belongs to the TrpC family.

The enzyme catalyses 1-(2-carboxyphenylamino)-1-deoxy-D-ribulose 5-phosphate + H(+) = (1S,2R)-1-C-(indol-3-yl)glycerol 3-phosphate + CO2 + H2O. It functions in the pathway amino-acid biosynthesis; L-tryptophan biosynthesis; L-tryptophan from chorismate: step 4/5. The polypeptide is Indole-3-glycerol phosphate synthase (Delftia acidovorans (strain DSM 14801 / SPH-1)).